A 138-amino-acid chain; its full sequence is Vesicle transport protein GOT1B (138 aa).

Met-1 carries the N-acetylmethionine modification. The Cytoplasmic segment spans residues 1–9; it reads MISLTDTQK. The helical transmembrane segment at 10–30 threads the bilayer; that stretch reads IGMGLTGFGVFFLFFGMILFF. Residues 31–32 are Lumenal-facing; that stretch reads DK. The chain crosses the membrane as a helical span at residues 33-53; the sequence is ALLAIGNVLFVAGLAFVIGLE. The Cytoplasmic segment spans residues 54–68; the sequence is RTFRFFFQRHKVKAT. Residue Glu-90 is a topological domain, lumenal. Residues 91–109 form a helical membrane-spanning segment; the sequence is IYGFFLLFRGFFPVVVGFI. The Cytoplasmic segment spans residues 110 to 138; that stretch reads RRVPVLGSLLNLPGIRSFVDKVGESNNMV.

This sequence belongs to the GOT1 family.

Its subcellular location is the golgi apparatus membrane. In terms of biological role, may be involved in fusion of ER-derived transport vesicles with the Golgi complex. The polypeptide is Vesicle transport protein GOT1B (Golt1b) (Mus musculus (Mouse)).